The primary structure comprises 261 residues: Flap endonuclease Xni (261 aa).

Aspartate 105 contributes to the Mg(2+) binding site. The 93-residue stretch at 164–256 (SQFLDLMALA…DFRVNSPTKA (93 aa)) folds into the 5'-3' exonuclease domain. K(+) is bound by residues leucine 172, alanine 173, proline 181, isoleucine 183, and isoleucine 186. The segment at 185-190 (GIGPKS) is interaction with DNA.

This sequence belongs to the Xni family. Mg(2+) serves as cofactor. K(+) is required as a cofactor.

Has flap endonuclease activity. During DNA replication, flap endonucleases cleave the 5'-overhanging flap structure that is generated by displacement synthesis when DNA polymerase encounters the 5'-end of a downstream Okazaki fragment. In Shewanella oneidensis (strain ATCC 700550 / JCM 31522 / CIP 106686 / LMG 19005 / NCIMB 14063 / MR-1), this protein is Flap endonuclease Xni.